Reading from the N-terminus, the 323-residue chain is Methionyl-tRNA formyltransferase (323 aa).

113–116 contributes to the (6S)-5,6,7,8-tetrahydrofolate binding site; it reads SLLP.

This sequence belongs to the Fmt family.

The catalysed reaction is L-methionyl-tRNA(fMet) + (6R)-10-formyltetrahydrofolate = N-formyl-L-methionyl-tRNA(fMet) + (6S)-5,6,7,8-tetrahydrofolate + H(+). In terms of biological role, attaches a formyl group to the free amino group of methionyl-tRNA(fMet). The formyl group appears to play a dual role in the initiator identity of N-formylmethionyl-tRNA by promoting its recognition by IF2 and preventing the misappropriation of this tRNA by the elongation apparatus. The protein is Methionyl-tRNA formyltransferase of Porphyromonas gingivalis (strain ATCC 33277 / DSM 20709 / CIP 103683 / JCM 12257 / NCTC 11834 / 2561).